Reading from the N-terminus, the 224-residue chain is UPF0758 protein Nmul_A2138 (224 aa).

In terms of domain architecture, MPN spans 102–224 (AMDSPGPVRA…TLSFAEQGLI (123 aa)). Zn(2+) contacts are provided by His-173, His-175, and Asp-186. The JAMM motif motif lies at 173-186 (HNHPSGAAEPSHAD).

This sequence belongs to the UPF0758 family.

The sequence is that of UPF0758 protein Nmul_A2138 from Nitrosospira multiformis (strain ATCC 25196 / NCIMB 11849 / C 71).